The sequence spans 454 residues: Bifunctional protein GlmU (454 aa).

The tract at residues 1–230 (MSGRFAVILA…LSETMGVNDR (230 aa)) is pyrophosphorylase. UDP-N-acetyl-alpha-D-glucosamine contacts are provided by residues 9–12 (LAAG), lysine 23, glutamine 73, and 78–79 (GT). Position 103 (aspartate 103) interacts with Mg(2+). UDP-N-acetyl-alpha-D-glucosamine-binding residues include glycine 140, glutamate 155, asparagine 170, and asparagine 228. Asparagine 228 lines the Mg(2+) pocket. The linker stretch occupies residues 231-251 (VALSQAEAAMRKRINEEWMRQ). Positions 252-454 (GVTIIDPQTT…NKDNYVKKDV (203 aa)) are N-acetyltransferase. The UDP-N-acetyl-alpha-D-glucosamine site is built by arginine 333 and lysine 351. Catalysis depends on histidine 363, which acts as the Proton acceptor. UDP-N-acetyl-alpha-D-glucosamine is bound by residues tyrosine 366 and asparagine 377. Acetyl-CoA is bound by residues 386-387 (NY), serine 405, alanine 423, and arginine 440.

In the N-terminal section; belongs to the N-acetylglucosamine-1-phosphate uridyltransferase family. It in the C-terminal section; belongs to the transferase hexapeptide repeat family. As to quaternary structure, homotrimer. Mg(2+) is required as a cofactor.

The protein resides in the cytoplasm. The catalysed reaction is alpha-D-glucosamine 1-phosphate + acetyl-CoA = N-acetyl-alpha-D-glucosamine 1-phosphate + CoA + H(+). It carries out the reaction N-acetyl-alpha-D-glucosamine 1-phosphate + UTP + H(+) = UDP-N-acetyl-alpha-D-glucosamine + diphosphate. The protein operates within nucleotide-sugar biosynthesis; UDP-N-acetyl-alpha-D-glucosamine biosynthesis; N-acetyl-alpha-D-glucosamine 1-phosphate from alpha-D-glucosamine 6-phosphate (route II): step 2/2. It participates in nucleotide-sugar biosynthesis; UDP-N-acetyl-alpha-D-glucosamine biosynthesis; UDP-N-acetyl-alpha-D-glucosamine from N-acetyl-alpha-D-glucosamine 1-phosphate: step 1/1. Its pathway is bacterial outer membrane biogenesis; LPS lipid A biosynthesis. In terms of biological role, catalyzes the last two sequential reactions in the de novo biosynthetic pathway for UDP-N-acetylglucosamine (UDP-GlcNAc). The C-terminal domain catalyzes the transfer of acetyl group from acetyl coenzyme A to glucosamine-1-phosphate (GlcN-1-P) to produce N-acetylglucosamine-1-phosphate (GlcNAc-1-P), which is converted into UDP-GlcNAc by the transfer of uridine 5-monophosphate (from uridine 5-triphosphate), a reaction catalyzed by the N-terminal domain. This is Bifunctional protein GlmU from Shouchella clausii (strain KSM-K16) (Alkalihalobacillus clausii).